The chain runs to 393 residues: NAD(P)H-quinone oxidoreductase subunit H, chloroplastic (393 aa).

Belongs to the complex I 49 kDa subunit family. As to quaternary structure, NDH is composed of at least 16 different subunits, 5 of which are encoded in the nucleus.

It localises to the plastid. The protein resides in the chloroplast thylakoid membrane. The enzyme catalyses a plastoquinone + NADH + (n+1) H(+)(in) = a plastoquinol + NAD(+) + n H(+)(out). It carries out the reaction a plastoquinone + NADPH + (n+1) H(+)(in) = a plastoquinol + NADP(+) + n H(+)(out). NDH shuttles electrons from NAD(P)H:plastoquinone, via FMN and iron-sulfur (Fe-S) centers, to quinones in the photosynthetic chain and possibly in a chloroplast respiratory chain. The immediate electron acceptor for the enzyme in this species is believed to be plastoquinone. Couples the redox reaction to proton translocation, and thus conserves the redox energy in a proton gradient. In Barbarea verna (Land cress), this protein is NAD(P)H-quinone oxidoreductase subunit H, chloroplastic.